Here is a 124-residue protein sequence, read N- to C-terminus: CPLHWSSYNGYCYRVFSELKTWEDAESFCYAQHKGSRLASIHSREEEAFVGKLASQTLKYTSMWLGLNNPWKECKWEWSDDAKLDYKVWLRRPYCAVMVVKTDRIFWFNRGCEKTVSFVCKFYS.

Disulfide bonds link Cys-1–Cys-12, Cys-29–Cys-120, and Cys-95–Cys-112. The region spanning 8–121 is the C-type lectin domain; sequence YNGYCYRVFS…CEKTVSFVCK (114 aa).

Belongs to the snaclec family. In terms of assembly, heterotetramer of subunit alpha, beta, gamma and delta; only the gamma and the delta subunits are disulfide-linked. Alpha-beta heterodimer and gamma-delta heterodimer associate orthogonally, giving a cruciform conformation. This heterotetramer may covalently dimerizes thanks to the gamma subunit. In terms of tissue distribution, expressed by the venom gland.

It is found in the secreted. Potent inhibitor of collagen-induced platelet aggregation. It acts by binding to the integrin alpha2A domain and blocks collagen binding to integrin alpha-2/beta-1 (ITGA2/ITGB1). The gamma/delta subunits mainly contribute to this activity. In Calloselasma rhodostoma (Malayan pit viper), this protein is Snaclec rhodocetin subunit delta.